Consider the following 125-residue polypeptide: Putative glutaredoxin-C2 (125 aa).

In terms of domain architecture, Glutaredoxin spans 2–103; it reads AERVARLSSQ…PLLREAGALW (102 aa). An intrachain disulfide couples cysteine 22 to cysteine 25.

Belongs to the glutaredoxin family. CC-type subfamily.

The protein resides in the cytoplasm. Functionally, has a glutathione-disulfide oxidoreductase activity in the presence of NADPH and glutathione reductase. Reduces low molecular weight disulfides and proteins. The protein is Putative glutaredoxin-C2 (GRXC2) of Oryza sativa subsp. japonica (Rice).